The chain runs to 121 residues: Large ribosomal subunit protein uL18 (121 aa).

This sequence belongs to the universal ribosomal protein uL18 family. As to quaternary structure, part of the 50S ribosomal subunit; part of the 5S rRNA/L5/L18/L25 subcomplex. Contacts the 5S and 23S rRNAs.

This is one of the proteins that bind and probably mediate the attachment of the 5S RNA into the large ribosomal subunit, where it forms part of the central protuberance. This is Large ribosomal subunit protein uL18 from Acidovorax ebreus (strain TPSY) (Diaphorobacter sp. (strain TPSY)).